Here is a 296-residue protein sequence, read N- to C-terminus: Chronophin (296 aa).

Aspartate 25 acts as the Nucleophile in catalysis. The Mg(2+) site is built by aspartate 25 and aspartate 27. Aspartate 27 functions as the Proton donor in the catalytic mechanism. Residues 58 to 60, histidine 182, and lysine 213 each bind substrate; that span reads SNN. Aspartate 238 contributes to the Mg(2+) binding site.

It belongs to the HAD-like hydrolase superfamily. Homodimer. Requires Mg(2+) as cofactor. In terms of tissue distribution, ubiquitously expressed (at protein level). Highly expressed in all the regions of central nerve system except the spinal cord. Also expressed at high level in liver and testis. In fetus, it is weakly expressed in all organs except brain.

The protein resides in the cytoplasm. Its subcellular location is the cytosol. It is found in the cytoskeleton. It localises to the cell projection. The protein localises to the ruffle membrane. The protein resides in the lamellipodium membrane. Its subcellular location is the cell membrane. The catalysed reaction is pyridoxal 5'-phosphate + H2O = pyridoxal + phosphate. It carries out the reaction pyridoxine 5'-phosphate + H2O = pyridoxine + phosphate. The enzyme catalyses pyridoxamine + phosphate = pyridoxamine 5'-phosphate + H2O. It catalyses the reaction O-phospho-L-seryl-[protein] + H2O = L-seryl-[protein] + phosphate. Its activity is regulated as follows. Inhibited by NaF, Zn(2+), Ca(2+), Mn(2+) and EDTA. In terms of biological role, functions as a pyridoxal phosphate (PLP) phosphatase, which also catalyzes the dephosphorylation of pyridoxine 5'-phosphate (PNP) and pyridoxamine 5'-phosphate (PMP), with order of substrate preference PLP &gt; PNP &gt; PMP and therefore plays a role in vitamin B6 metabolism. Also functions as a protein serine phosphatase that specifically dephosphorylates 'Ser-3' in proteins of the actin-depolymerizing factor (ADF)/cofilin family like CFL1 and DSTN. Thereby, regulates cofilin-dependent actin cytoskeleton reorganization, being required for normal progress through mitosis and normal cytokinesis. Does not dephosphorylate phosphothreonines in LIMK1. Does not dephosphorylate peptides containing phosphotyrosine. This is Chronophin from Homo sapiens (Human).